The chain runs to 273 residues: MSLTNTKTGFSVKDILDLPDTNDEDGSVAEGPEEESEGPEPAKRAGPLGQGALDAVQSLPLKSPFYDSSDNPYTRWLASTEGLQYSLHGLAASAPPQDSSSKSPEPSADESPDNDKETQGGGGDAGKKRKRRVLFSKAQTYELERRFRQQRYLSAPEREHLASLIRLTPTQVKIWFQNHRYKMKRARAEKGMEVTPLPSPRRVAVPVLVRDGKPCHALKAQDLAAATFQAGIPFSAYSAQSLQHMQYNAQYSSASTPQYPTAHPLVQAQQWTW.

Disordered regions lie at residues M1–V56 and A91–R131. The segment covering D20–G38 has biased composition (acidic residues). Residues K128–R187 constitute a DNA-binding region (homeobox).

Belongs to the NK-2 homeobox family. In terms of assembly, interacts with OLIG2. As to expression, expressed in restricted areas of the developing CNS: the hindbrain and forebrain, and pancreas.

It is found in the nucleus. Transcriptional activator involved in the development of insulin-producting beta cells in the endocrine pancreas. May also be involved in specifying diencephalic neuromeric boundaries, and in controlling the expression of genes that play a role in axonal guidance. Binds to elements within the NEUROD1 promoter. This chain is Homeobox protein Nkx-2.2 (Nkx2-2), found in Mus musculus (Mouse).